A 441-amino-acid chain; its full sequence is POC1 centriolar protein homolog A (441 aa).

WD repeat units lie at residues 16–55, 58–97, 100–139, 142–181, 184–223, 226–265, and 268–307; these read GHRD…RAYR, GHKD…ESTV, AHTG…FLFS, QHIN…CIHS, EHGG…LIQH, VHSG…LLYT, and GHQG…ASYA. The segment at 323-380 is disordered; the sequence is DYTSGVPAADRHRPERNAQTDQADDLEPRHIQMSAKDRSSPLSYTSRSIDQHHPQAED. 3 stretches are compositionally biased toward basic and acidic residues: residues 331–340, 348–361, and 371–380; these read ADRHRPERNA, LEPR…KDRS, and IDQHHPQAED. The stretch at 400 to 427 forms a coiled coil; sequence LTRTVGILEQRLSLTEDKLKECIDNQQA.

The protein belongs to the WD repeat POC1 family. Interacts with pat.

The protein resides in the cytoplasm. The protein localises to the cytoskeleton. In terms of biological role, may play an important role in centriole assembly and/or stability and ciliogenesis. This Xenopus tropicalis (Western clawed frog) protein is POC1 centriolar protein homolog A (poc1a).